Here is a 609-residue protein sequence, read N- to C-terminus: Membrane protein insertase YidC (609 aa).

A helical transmembrane segment spans residues 9 to 29; the sequence is IIAIVLSGLILIAWQYFYNIP. Positions 35-63 are disordered; sequence RAAQQAQSQTAKSPTEPTPNSPKPDHPAA. The next 4 helical transmembrane spans lie at 375-395, 449-469, 507-527, and 546-566; these read VFGN…AIFF, LPMV…FVTI, LLGP…TMWF, and WMPV…VIYW.

This sequence belongs to the OXA1/ALB3/YidC family. Type 1 subfamily. Interacts with the Sec translocase complex via SecD. Specifically interacts with transmembrane segments of nascent integral membrane proteins during membrane integration.

Its subcellular location is the cell inner membrane. In terms of biological role, required for the insertion and/or proper folding and/or complex formation of integral membrane proteins into the membrane. Involved in integration of membrane proteins that insert both dependently and independently of the Sec translocase complex, as well as at least some lipoproteins. Aids folding of multispanning membrane proteins. The polypeptide is Membrane protein insertase YidC (Nitrobacter hamburgensis (strain DSM 10229 / NCIMB 13809 / X14)).